The sequence spans 306 residues: Pantothenate kinase (306 aa).

Residue 90 to 97 (GSVAVGKS) participates in ATP binding.

The protein belongs to the prokaryotic pantothenate kinase family.

It localises to the cytoplasm. The enzyme catalyses (R)-pantothenate + ATP = (R)-4'-phosphopantothenate + ADP + H(+). Its pathway is cofactor biosynthesis; coenzyme A biosynthesis; CoA from (R)-pantothenate: step 1/5. The polypeptide is Pantothenate kinase (Listeria monocytogenes serotype 4b (strain CLIP80459)).